We begin with the raw amino-acid sequence, 224 residues long: MMTNLFSVFDPSAIFNFSLNWLSTFLGLLMIPSIYWLMPSRYNIMWNSILLTLHKEFKTLLGPSGHNGSTFIFISLFSLILFNNFMGLFPYIFTSTSHLTLTLSLALPLWLCFMLYGWINHTQHMFAHLVPQGTPAILMPFMVCIETISNIIRPGTLAVRLTANMIAGHLLLTLLGNTGPSMSYILVTFLLMAQIALLVLESAVAMIQSYVFAVLSTLYSSEVN.

Helical transmembrane passes span 17-37 (FSLN…IYWL), 72-92 (IFIS…FPYI), 99-119 (LTLT…YGWI), 125-145 (MFAH…MVCI), 166-186 (IAGH…SYIL), and 187-207 (VTFL…VAMI).

This sequence belongs to the ATPase A chain family. As to quaternary structure, F-type ATPases have 2 components, CF(1) - the catalytic core - and CF(0) - the membrane proton channel. CF(1) has five subunits: alpha(3), beta(3), gamma(1), delta(1), epsilon(1). CF(0) has three main subunits: a, b and c.

It localises to the mitochondrion inner membrane. Functionally, mitochondrial membrane ATP synthase (F(1)F(0) ATP synthase or Complex V) produces ATP from ADP in the presence of a proton gradient across the membrane which is generated by electron transport complexes of the respiratory chain. F-type ATPases consist of two structural domains, F(1) - containing the extramembraneous catalytic core and F(0) - containing the membrane proton channel, linked together by a central stalk and a peripheral stalk. During catalysis, ATP synthesis in the catalytic domain of F(1) is coupled via a rotary mechanism of the central stalk subunits to proton translocation. Key component of the proton channel; it may play a direct role in the translocation of protons across the membrane. The polypeptide is ATP synthase subunit a (mt:ATPase6) (Drosophila melanogaster (Fruit fly)).